A 306-amino-acid polypeptide reads, in one-letter code: tRNA pseudouridine synthase B (306 aa).

Asp-43 functions as the Nucleophile in the catalytic mechanism.

It belongs to the pseudouridine synthase TruB family. Type 1 subfamily.

It carries out the reaction uridine(55) in tRNA = pseudouridine(55) in tRNA. Functionally, responsible for synthesis of pseudouridine from uracil-55 in the psi GC loop of transfer RNAs. The protein is tRNA pseudouridine synthase B of Lacticaseibacillus casei (strain BL23) (Lactobacillus casei).